Consider the following 521-residue polypeptide: Bifunctional purine biosynthesis protein PurH (521 aa).

One can recognise an MGS-like domain in the interval Met1–Val145.

Belongs to the PurH family.

The enzyme catalyses (6R)-10-formyltetrahydrofolate + 5-amino-1-(5-phospho-beta-D-ribosyl)imidazole-4-carboxamide = 5-formamido-1-(5-phospho-D-ribosyl)imidazole-4-carboxamide + (6S)-5,6,7,8-tetrahydrofolate. It carries out the reaction IMP + H2O = 5-formamido-1-(5-phospho-D-ribosyl)imidazole-4-carboxamide. It participates in purine metabolism; IMP biosynthesis via de novo pathway; 5-formamido-1-(5-phospho-D-ribosyl)imidazole-4-carboxamide from 5-amino-1-(5-phospho-D-ribosyl)imidazole-4-carboxamide (10-formyl THF route): step 1/1. The protein operates within purine metabolism; IMP biosynthesis via de novo pathway; IMP from 5-formamido-1-(5-phospho-D-ribosyl)imidazole-4-carboxamide: step 1/1. The protein is Bifunctional purine biosynthesis protein PurH of Burkholderia orbicola (strain MC0-3).